The following is a 287-amino-acid chain: Probable ABC transporter extracellular-binding protein YckB (287 aa).

Residues Met-1–Ala-24 form the signal peptide. Cys-25 carries N-palmitoyl cysteine lipidation. A lipid anchor (S-diacylglycerol cysteine) is attached at Cys-25.

This sequence belongs to the bacterial solute-binding protein 3 family.

It localises to the cell membrane. Functionally, probably part of a binding-protein-dependent transport system. This chain is Probable ABC transporter extracellular-binding protein YckB (yckB), found in Bacillus subtilis (strain 168).